The sequence spans 320 residues: Glycerol-3-phosphate dehydrogenase [NAD(P)+] (320 aa).

NADPH contacts are provided by Phe11, Arg30, and Lys102. Residues Lys102, Gly130, and Ser132 each coordinate sn-glycerol 3-phosphate. Residue Ala134 coordinates NADPH. The sn-glycerol 3-phosphate site is built by Lys185, Asp238, Ser248, Arg249, and Asn250. Lys185 functions as the Proton acceptor in the catalytic mechanism. Arg249 lines the NADPH pocket. Glu270 provides a ligand contact to NADPH.

The protein belongs to the NAD-dependent glycerol-3-phosphate dehydrogenase family.

It is found in the cytoplasm. The catalysed reaction is sn-glycerol 3-phosphate + NAD(+) = dihydroxyacetone phosphate + NADH + H(+). It catalyses the reaction sn-glycerol 3-phosphate + NADP(+) = dihydroxyacetone phosphate + NADPH + H(+). Its pathway is membrane lipid metabolism; glycerophospholipid metabolism. Functionally, catalyzes the reduction of the glycolytic intermediate dihydroxyacetone phosphate (DHAP) to sn-glycerol 3-phosphate (G3P), the key precursor for phospholipid synthesis. In Ruegeria sp. (strain TM1040) (Silicibacter sp.), this protein is Glycerol-3-phosphate dehydrogenase [NAD(P)+].